The following is a 340-amino-acid chain: Phosphoribosylformylglycinamidine cyclo-ligase (340 aa).

It belongs to the AIR synthase family.

It localises to the cytoplasm. The enzyme catalyses 2-formamido-N(1)-(5-O-phospho-beta-D-ribosyl)acetamidine + ATP = 5-amino-1-(5-phospho-beta-D-ribosyl)imidazole + ADP + phosphate + H(+). The protein operates within purine metabolism; IMP biosynthesis via de novo pathway; 5-amino-1-(5-phospho-D-ribosyl)imidazole from N(2)-formyl-N(1)-(5-phospho-D-ribosyl)glycinamide: step 2/2. This chain is Phosphoribosylformylglycinamidine cyclo-ligase, found in Streptococcus agalactiae serotype V (strain ATCC BAA-611 / 2603 V/R).